Here is a 246-residue protein sequence, read N- to C-terminus: Probable transcriptional regulatory protein CKO_01097 (246 aa).

Residues 1–20 (MAGHSKWANTRHRKAAQDAK) are disordered.

The protein belongs to the TACO1 family.

The protein localises to the cytoplasm. In Citrobacter koseri (strain ATCC BAA-895 / CDC 4225-83 / SGSC4696), this protein is Probable transcriptional regulatory protein CKO_01097.